Consider the following 321-residue polypeptide: Fibronectin type III domain-containing protein 8 (321 aa).

The Fibronectin type-III domain maps to 175–277; the sequence is VPEVPFICEH…KPYKFATVST (103 aa).

The chain is Fibronectin type III domain-containing protein 8 (Fndc8) from Mus musculus (Mouse).